Reading from the N-terminus, the 315-residue chain is Ribosomal RNA small subunit methyltransferase H (315 aa).

S-adenosyl-L-methionine contacts are provided by residues Gly36–His38, Asp56, Phe81, Asp103, and Gln110.

This sequence belongs to the methyltransferase superfamily. RsmH family.

The protein resides in the cytoplasm. The enzyme catalyses cytidine(1402) in 16S rRNA + S-adenosyl-L-methionine = N(4)-methylcytidine(1402) in 16S rRNA + S-adenosyl-L-homocysteine + H(+). Functionally, specifically methylates the N4 position of cytidine in position 1402 (C1402) of 16S rRNA. The protein is Ribosomal RNA small subunit methyltransferase H of Idiomarina loihiensis (strain ATCC BAA-735 / DSM 15497 / L2-TR).